The following is a 371-amino-acid chain: Assembly protein G7 (371 aa).

It belongs to the chordopoxvirinae G7 family. Part of a complex composed of A30, G7, F10 kinase, A15, D2, D3, and J1. In terms of processing, phosphorylated on serines by F10 kinase, phosphorylation state is regulated by H1 phosphatase. Post-translationally, undergoes proteolytic processing during morphogenesis, probably required for the transformation of immature virions (IV) into mature virions (MV).

The protein localises to the host cytoplasm. Its subcellular location is the virion. Functionally, late protein which is a part of a large complex required for early virion morphogenesis. This complex participates in the formation of virosomes and the incorporation of virosomal contents into nascent immature virions. This is Assembly protein G7 from Variola virus (isolate Human/India/Ind3/1967) (VARV).